We begin with the raw amino-acid sequence, 86 residues long: Probable weak neurotoxin NNAM3 (86 aa).

The signal sequence occupies residues Met1–Thr21. 5 disulfides stabilise this stretch: Cys24–Cys45, Cys27–Cys32, Cys38–Cys63, Cys67–Cys78, and Cys79–Cys84.

The protein belongs to the three-finger toxin family. Ancestral subfamily. Orphan group II sub-subfamily. As to expression, expressed by the venom gland.

The protein resides in the secreted. Its function is as follows. Binds with low affinity to muscular (alpha-1-beta-1-delta-epsilon/CHRNA1-CHRNB1-CHRND-CHRNE) and very low affinity to neuronal (alpha-7/CHRNA7) nicotinic acetylcholine receptor (nAChR). This is Probable weak neurotoxin NNAM3 from Naja atra (Chinese cobra).